The following is a 373-amino-acid chain: tRNA-specific 2-thiouridylase MnmA (373 aa).

Residues 7 to 14 and L33 contribute to the ATP site; that span reads AMSGGVDS. The active-site Nucleophile is the C101. C101 and C215 are disulfide-bonded. G125 serves as a coordination point for ATP. Positions 165–167 are interaction with tRNA; the sequence is KDQ. C215 acts as the Cysteine persulfide intermediate in catalysis.

The protein belongs to the MnmA/TRMU family.

Its subcellular location is the cytoplasm. The catalysed reaction is S-sulfanyl-L-cysteinyl-[protein] + uridine(34) in tRNA + AH2 + ATP = 2-thiouridine(34) in tRNA + L-cysteinyl-[protein] + A + AMP + diphosphate + H(+). Functionally, catalyzes the 2-thiolation of uridine at the wobble position (U34) of tRNA, leading to the formation of s(2)U34. The protein is tRNA-specific 2-thiouridylase MnmA of Roseiflexus sp. (strain RS-1).